The primary structure comprises 730 residues: Probable G-protein coupled receptor 149 (730 aa).

Residues 1 to 34 (MSFFLSNLTNDSRLWKVSHNSTDLMNSPETLTLS) lie on the Extracellular side of the membrane. N-linked (GlcNAc...) asparagine glycosylation is found at Asn7, Asn10, and Asn20. A helical membrane pass occupies residues 35–55 (LFCLICLMTLVALVGSIFSLV). Residues 56 to 68 (SLLTMQYRTVVSM) are Cytoplasmic-facing. Residues 69 to 89 (LVTSWSVDDLLSVLSVAIFMV) form a helical membrane-spanning segment. At 90–108 (LQWPREAPGYFQSLCTTSA) the chain is on the extracellular side. A disulfide bridge links Cys104 with Cys181. A helical membrane pass occupies residues 109–131 (LLYMCQGLSSNLKATLIVFYNFY). Residues 132–148 (TMHRTVVSQSSSWRSGQ) lie on the Cytoplasmic side of the membrane. Residues 149 to 169 (VLGVALTVWAVSLLLASLPLC) form a helical membrane-spanning segment. Residues 170–188 (GWGVFVRTPWGCLTDCSSP) lie on the Extracellular side of the membrane. Residues 189–209 (YVLLLFAVYASAFGLLAVLSV) traverse the membrane as a helical segment. Residues 210 to 308 (PLTHQLLCSE…SFPVSLAQKR (99 aa)) lie on the Cytoplasmic side of the membrane. A helical transmembrane segment spans residues 309-329 (FALILALTKVILWLPMMIHMV). The Extracellular segment spans residues 330-340 (VKHVVGFQSLP). Residues 341–361 (VDMLSFLLTLLASTVTPVFVL) traverse the membrane as a helical segment. The Cytoplasmic portion of the chain corresponds to 362–730 (SKRWAHLPCG…RKREAESKGN (369 aa)).

It belongs to the G-protein coupled receptor 1 family. As to expression, expressed exclusively in brain and testis.

The protein localises to the cell membrane. In terms of biological role, orphan receptor. The sequence is that of Probable G-protein coupled receptor 149 (Gpr149) from Rattus norvegicus (Rat).